We begin with the raw amino-acid sequence, 513 residues long: GMP synthase [glutamine-hydrolyzing] (513 aa).

Residues 9 to 198 (LILVLDFGSQ…VRRVCNCTGE (190 aa)) form the Glutamine amidotransferase type-1 domain. Catalysis depends on cysteine 86, which acts as the Nucleophile. Residues histidine 172 and glutamate 174 contribute to the active site. A GMPS ATP-PPase domain is found at 199-388 (WTMENFIEIE…LGIPEHLVWR (190 aa)). Position 226–232 (226–232 (SGGVDSS)) interacts with ATP.

Homodimer.

It carries out the reaction XMP + L-glutamine + ATP + H2O = GMP + L-glutamate + AMP + diphosphate + 2 H(+). It functions in the pathway purine metabolism; GMP biosynthesis; GMP from XMP (L-Gln route): step 1/1. Its function is as follows. Catalyzes the synthesis of GMP from XMP. The sequence is that of GMP synthase [glutamine-hydrolyzing] from Staphylococcus epidermidis (strain ATCC 35984 / DSM 28319 / BCRC 17069 / CCUG 31568 / BM 3577 / RP62A).